The following is a 224-amino-acid chain: uncharacterized protein (224 aa).

The N-terminal stretch at 1-30 (MSRSSSSMATVLVVLMVVSAGGLSPPCAAA) is a signal peptide. Asn-141 carries an N-linked (GlcNAc...) asparagine glycan.

It localises to the secreted. This is an uncharacterized protein from Oryza sativa subsp. japonica (Rice).